The sequence spans 252 residues: Adenosylcobinamide-GDP ribazoletransferase (252 aa).

A run of 5 helical transmembrane segments spans residues 33-53 (FISPLMVGIITGIIDWFVVLL), 105-125 (TGSGAIGLFLVYFSIFLIATL), 132-152 (LWFFLPSEVLARASAISLLGL), 184-204 (FAILFSSPVLILAYVILLLVF), and 215-235 (MSGDIVGAIITLSFPIYLLVA).

The protein belongs to the CobS family. It depends on Mg(2+) as a cofactor.

Its subcellular location is the cell membrane. It carries out the reaction alpha-ribazole + adenosylcob(III)inamide-GDP = adenosylcob(III)alamin + GMP + H(+). The enzyme catalyses alpha-ribazole 5'-phosphate + adenosylcob(III)inamide-GDP = adenosylcob(III)alamin 5'-phosphate + GMP + H(+). It participates in cofactor biosynthesis; adenosylcobalamin biosynthesis; adenosylcobalamin from cob(II)yrinate a,c-diamide: step 7/7. In terms of biological role, joins adenosylcobinamide-GDP and alpha-ribazole to generate adenosylcobalamin (Ado-cobalamin). Also synthesizes adenosylcobalamin 5'-phosphate from adenosylcobinamide-GDP and alpha-ribazole 5'-phosphate. In Sulfolobus acidocaldarius (strain ATCC 33909 / DSM 639 / JCM 8929 / NBRC 15157 / NCIMB 11770), this protein is Adenosylcobinamide-GDP ribazoletransferase.